Reading from the N-terminus, the 179-residue chain is MELHATTIFAVQHDGKAAMAGDGQVTLGESVVMKHTAKKVRRLFHDKVIAGFAGSVADAFTLFEKFEAKLNEYNGNLERASVELAQQWRSDSVLRKLEAMLIVMDKDTLLLVSGTGEVIEPDDGILAIGSGGNYALAAGRALKRHNGGQMEAKDIARHALEIASEICVFTNDHITVEEL.

Threonine 6 is a catalytic residue. Positions 164, 167, and 170 each coordinate Na(+).

It belongs to the peptidase T1B family. HslV subfamily. As to quaternary structure, a double ring-shaped homohexamer of HslV is capped on each side by a ring-shaped HslU homohexamer. The assembly of the HslU/HslV complex is dependent on binding of ATP.

It localises to the cytoplasm. It carries out the reaction ATP-dependent cleavage of peptide bonds with broad specificity.. With respect to regulation, allosterically activated by HslU binding. Its function is as follows. Protease subunit of a proteasome-like degradation complex believed to be a general protein degrading machinery. In Listeria monocytogenes serotype 4b (strain CLIP80459), this protein is ATP-dependent protease subunit HslV.